We begin with the raw amino-acid sequence, 65 residues long: Ferredoxin-1 (65 aa).

Positions 2–30 constitute a 4Fe-4S ferredoxin-type domain; it reads AMKIDPELCTSCGDCEPVCPTNAIAPKKG. [4Fe-4S] cluster contacts are provided by Cys-10, Cys-13, Cys-16, Cys-20, Cys-39, Cys-42, Cys-51, and Cys-55.

Requires [4Fe-4S] cluster as cofactor.

Its function is as follows. Ferredoxins are iron-sulfur proteins that transfer electrons in a wide variety of metabolic reactions. This ferredoxin probably participates in nitrogen fixation. The chain is Ferredoxin-1 (fdxN) from Rhodobacter capsulatus (Rhodopseudomonas capsulata).